Reading from the N-terminus, the 689-residue chain is Shutoff protein (689 aa).

The disordered stretch occupies residues 1–24; that stretch reads MSEEPVSGTTVEIEEDTHTPPNSP. Residues 226–289 are binding to host EIF4G; that stretch reads VMNNLLVKRA…SVLVTVVLEC (64 aa). The region spanning 292–410 is the RRM domain; the sequence is RLFTSKDMVK…PLYTETSQRL (119 aa). Tyr309 and Tyr627 each carry phosphotyrosine; by host. The segment at 625 to 689 is disordered; sequence GQYLDPHTGE…GEPDVRGTTS (65 aa). Positions 645–655 are enriched in basic and acidic residues; that stretch reads SGHEFQGDGRH. The span at 656–675 shows a compositional bias: basic residues; the sequence is REPKRGRHFRQRGGPRKPPR. The segment covering 678–689 has biased composition (basic and acidic residues); the sequence is AGGEPDVRGTTS.

It belongs to the adenoviridae shutoff protein family. In terms of assembly, monomer. Interacts with hexon protein; this interaction allows chaperoning and trimerization of hexon proteins. Interacts (via N-terminus) with host initiation factor EIF4G (via C-terminus). Interacts (via RRM domain) with viral mRNAs that contain the tripartite leader; this interaction allows ribosome shunting and expression of viral late mRNAs. In terms of processing, might be cleaved by the viral protease. Post-translationally, phosphorylated. Tyrosine phosphorylation enhances preferential binding to tripartite leader mRNAs and allows ribosome shunting. Methylated. Asymmetric dimethylation by host PRMT1 of the Arg/Gly-rich region may regulate shutoff protein binding to hexon and promote the capsid assembly in the nucleus.

It localises to the host cytoplasm. Its function is as follows. Protein that inhibits host translation while promoting late viral translation by ribosome shunting. Blocks host cap-dependent translation by binding to eIF4G, displacing MKNK1 from cap initiation complexes and preventing EIF4E phosphorylation. Binds to the tripartite leader sequence of viral late mRNAs and recruits host eIF4G, PABPC1/poly-A binding protein and 40S ribosomes subunits on viral mRNAs, allowing ribosome shunting and efficient translation of late viral mRNAs even though conventional translation via ribosome scanning from the cap has been shut off in the host cell. During assembly, acts as a chaperone protein that helps hexon proteins assembly into trimers. In Canis lupus familiaris (Dog), this protein is Shutoff protein.